The sequence spans 298 residues: uncharacterized protein (298 aa).

The next 10 helical transmembrane spans lie at glycine 9–lysine 28, isoleucine 38–proline 60, arginine 72–valine 94, leucine 104–leucine 121, leucine 128–tryptophan 145, leucine 150–isoleucine 167, alanine 174–phenylalanine 196, proline 211–alanine 233, alanine 240–glycine 262, and alanine 272–leucine 291. One can recognise an EamA domain in the interval valine 18–alanine 141.

Belongs to the EamA transporter family.

The protein localises to the cell membrane. This is an uncharacterized protein from Pseudomonas aeruginosa (strain ATCC 15692 / DSM 22644 / CIP 104116 / JCM 14847 / LMG 12228 / 1C / PRS 101 / PAO1).